The primary structure comprises 78 residues: U29-theraphotoxin-Cg1a (78 aa).

An N-terminal signal peptide occupies residues 1–19 (MRYQTVFWILLIALCTVNP). 4 cysteine pairs are disulfide-bonded: cysteine 42–cysteine 56, cysteine 49–cysteine 60, cysteine 55–cysteine 77, and cysteine 67–cysteine 73.

Belongs to the neurotoxin 13 (insecticidal toxin ABC) family. 03 (JZTX-59) subfamily. As to expression, expressed by the venom gland.

It localises to the secreted. In terms of biological role, probable ion channel inhibitor. This chain is U29-theraphotoxin-Cg1a, found in Chilobrachys guangxiensis (Chinese earth tiger tarantula).